The sequence spans 1247 residues: Structural polyprotein (1247 aa).

A host transcription inhibition region spans residues 36–67 (RPAGQLAQLISAVSRLALRTVPQKPRRTRKIK). Residues 54–103 (RTVPQKPRRTRKIKKQKQVKQEQQSTTNQKKKAPKQKQTQKKKRPGRRER) form a disordered region. Composition is skewed to basic residues over residues 59–71 (KPRR…KQKQ) and 82–100 (QKKK…RPGR). A Nuclear localization signal motif is present at residues 60-98 (PRRTRKIKKQKQVKQEQQSTTNQKKKAPKQKQTQKKKRP). Residues 83 to 113 (KKKAPKQKQTQKKKRPGRRERMCMKIENDCI) form a binding to the viral RNA region. The ribosome-binding stretch occupies residues 98–112 (PGRRERMCMKIENDC). The cysteines at positions 112 and 127 are disulfide-linked. Residues 112-260 (CIFEVRHEGK…KITPEGSVEW (149 aa)) form the Peptidase S3 domain. His138 functions as the Charge relay system in the catalytic mechanism. A Nuclear export signal motif is present at residues 143–153 (IDNADLAKLAF). Residues 154 to 159 (KRSSKY) are interaction with spike glycoprotein E2. The Charge relay system role is filled by Asp160. The tract at residues 182–192 (PEGYYNWHHGA) is dimerization of the capsid protein. The active-site Charge relay system is Ser212. A dimerization of the capsid protein region spans residues 218 to 222 (DNKGR). Residues 261–273 (SLALPVMCLLANT) form a functions as an uncleaved signal peptide for the precursor of protein E3/E2 region. Cystine bridges form between Cys268-Cys277, Cys282-Cys286, Cys285-Cys317, Cys343-Cys449, Cys346-Cys352, Cys415-Cys429, Cys477-Cys590, Cys525-Cys549, and Cys527-Cys544. Asn272 carries N-linked (GlcNAc...) asparagine; by host glycosylation. Residues Asn587 and Asn669 are each glycosylated (N-linked (GlcNAc...) asparagine; by host). A helical transmembrane segment spans residues 692–712 (IAVLAAASIVITSLVGLSLGM). Positions 715–719 (CARRR) are interaction with the capsid protein. S-palmitoyl cysteine; by host attachment occurs at residues Cys720, Cys740, and Cys741. Residues 720-740 (CITPYELTPGATIPFLLGVLC) form a helical membrane-spanning segment. The interval 720–740 (CITPYELTPGATIPFLLGVLC) is transient transmembrane before p62-6K protein processing. Cysteines 720 and 741 form a disulfide. A helical membrane pass occupies residues 763–783 (PLFWLQLLIPLSAAIVVCNCL). Disulfide bonds link Cys857–Cys922, Cys870–Cys902, Cys871–Cys904, and Cys876–Cys886. An E1 fusion peptide loop region spans residues 892 to 909 (VYPFMWGGAYCFCDAENT). Asn949 and Asn1078 each carry an N-linked (GlcNAc...) asparagine; by host glycan. 4 disulfide bridges follow: Cys1067/Cys1079, Cys1109/Cys1184, Cys1114/Cys1188, and Cys1136/Cys1178. The helical transmembrane segment at 1224-1244 (GVGLVVAIAALILIIVLCVSF) threads the bilayer. Cys1241 carries the S-palmitoyl cysteine; by host lipid modification. Cys1241 is lipidated: S-stearoyl cysteine; by host.

Homodimer. Homomultimer. Interacts with host karyopherin KPNA4; this interaction allows the nuclear import of the viral capsid protein. Interacts with spike glycoprotein E2. Interacts with host IRAK1; the interaction leads to inhibition of IRAK1-dependent signaling. In terms of assembly, the precursor of protein E3/E2 and E1 form a heterodimer shortly after synthesis. As to quaternary structure, the precursor of protein E3/E2 and E1 form a heterodimer shortly after synthesis. Processing of the precursor of protein E3/E2 into E2 and E3 results in a heterodimer of the spike glycoproteins E2 and E1. Spike at virion surface are constituted of three E2-E1 heterodimers. After target cell attachment and endocytosis, E1 change conformation to form homotrimers. Interacts with 6K protein. Interacts with spike glycoprotein E1. Processing of the precursor of protein E3/E2 into E2 and E3 results in a heterodimer of the spike glycoproteins E2 and E1. Spike at virion surface are constituted of a trimer of E2-E1 heterodimers. Interacts with 6K protein. Interacts with host MXRA8; this interaction mediates virus entry. In terms of assembly, oligomer. Interacts with spike glycoprotein E1. Interacts with spike glycoprotein E2. In terms of processing, structural polyprotein: Specific enzymatic cleavages in vivo yield mature proteins. Capsid protein is auto-cleaved during polyprotein translation, unmasking a signal peptide at the N-terminus of the precursor of E3/E2. The remaining polyprotein is then targeted to the host endoplasmic reticulum, where host signal peptidase cleaves it into pE2, 6K and E1 proteins. pE2 is further processed to mature E3 and E2 by host furin in trans-Golgi vesicle. Palmitoylated via thioester bonds. These palmitoylations may induce disruption of the C-terminus transmembrane. This would result in the reorientation of E2 C-terminus from lumenal to cytoplasmic side. Post-translationally, N-glycosylated. In terms of processing, palmitoylated via thioester bonds.

The protein localises to the virion. The protein resides in the host cytoplasm. It localises to the host cell membrane. It is found in the host nucleus. Its subcellular location is the virion membrane. The protein localises to the host Golgi apparatus. The protein resides in the host trans-Golgi network. It localises to the host endoplasmic reticulum. It catalyses the reaction Autocatalytic release of the core protein from the N-terminus of the togavirus structural polyprotein by hydrolysis of a -Trp-|-Ser- bond.. Forms an icosahedral capsid with a T=4 symmetry composed of 240 copies of the capsid protein surrounded by a lipid membrane through which penetrate 80 spikes composed of trimers of E1-E2 heterodimers. The capsid protein binds to the viral RNA genome at a site adjacent to a ribosome binding site for viral genome translation following genome release. Possesses a protease activity that results in its autocatalytic cleavage from the nascent structural protein. Following its self-cleavage, the capsid protein transiently associates with ribosomes, and within several minutes the protein binds to viral RNA and rapidly assembles into icosahedric core particles. The resulting nucleocapsid eventually associates with the cytoplasmic domain of the spike glycoprotein E2 at the cell membrane, leading to budding and formation of mature virions. In case of infection, new virions attach to target cells and after clathrin-mediated endocytosis their membrane fuses with the host endosomal membrane. This leads to the release of the nucleocapsid into the cytoplasm, followed by an uncoating event necessary for the genomic RNA to become accessible. The uncoating might be triggered by the interaction of capsid proteins with ribosomes. Binding of ribosomes would release the genomic RNA since the same region is genomic RNA-binding and ribosome-binding. Specifically inhibits interleukin-1 receptor-associated kinase 1/IRAK1-dependent signaling during viral entry, representing a means by which the alphaviruses may evade innate immune detection and activation prior to viral gene expression. Its function is as follows. Provides the signal sequence for the translocation of the precursor of protein E3/E2 to the host endoplasmic reticulum. Furin-cleaved E3 remains associated with spike glycoprotein E1 and mediates pH protection of the latter during the transport via the secretory pathway. After virion release from the host cell, the assembly protein E3 is gradually released in the extracellular space. Functionally, plays a role in viral attachment to target host cell, by binding to the cell receptor MXRA8. Synthesized as a p62 precursor which is processed by furin at the cell membrane just before virion budding, giving rise to E2-E1 heterodimer. The p62-E1 heterodimer is stable, whereas E2-E1 is unstable and dissociate at low pH. p62 is processed at the last step, presumably to avoid E1 fusion activation before its final export to cell surface. E2 C-terminus contains a transitory transmembrane that would be disrupted by palmitoylation, resulting in reorientation of the C-terminal tail from lumenal to cytoplasmic side. This step is critical since E2 C-terminus is involved in budding by interacting with capsid proteins. This release of E2 C-terminus in cytoplasm occurs lately in protein export, and precludes premature assembly of particles at the endoplasmic reticulum membrane. In terms of biological role, acts as a viroporin that participates in virus glycoprotein processing and transport to the plasma membrane, cell permeabilization and budding of viral particles. Disrupts the calcium homeostasis of the cell, probably at the endoplasmic reticulum level. This leads to cytoplasmic calcium elevation. Because of its lipophilic properties, the 6K protein is postulated to influence the selection of lipids that interact with the transmembrane domains of the glycoproteins, which, in turn, affects the deformability of the bilayer required for the extreme curvature that occurs as budding proceeds. Present in low amount in virions, about 3% compared to viral glycoproteins. Class II viral fusion protein. Fusion activity is inactive as long as E1 is bound to E2 in mature virion. After virus attachment to target cell via host MXRA8 and endocytosis, acidification of the endosome induce dissociation of E1/E2 heterodimer and concomitant trimerization of the E1 subunits. This E1 trimer is fusion active, and promotes release of viral nucleocapsid in cytoplasm after endosome and viral membrane fusion. Efficient fusion requires the presence of cholesterol and sphingolipid in the target membrane. The chain is Structural polyprotein from O'nyong-nyong virus (strain Gulu) (ONNV).